Reading from the N-terminus, the 380-residue chain is Probable peptidoglycan glycosyltransferase FtsW (380 aa).

10 helical membrane passes run 14–34 (LLWCTLCLLLIGVTMVTSSSI), 52–72 (ILYLVILFFIFKIFLDVPISF), 79–99 (IILLISISTLLLVLIIGNSIH), 112–131 (MQPSELSKLAMFCYLSNYLS), 141–161 (FGGFLKPIIIISFPLILLLVE), 162–182 (PDLGTTIVILLTTLSLLFISG), 188–208 (FIPTILIIVVTTTVLIIKSPY), 268–288 (IIGEELGYIGACTILFMIFFI), 304–324 (IFFSGYFAFSIGLWLIFQTLI), and 341–361 (PLISYGGSSLIIVSIAIIILI).

Belongs to the SEDS family. FtsW subfamily.

It localises to the cell membrane. The enzyme catalyses [GlcNAc-(1-&gt;4)-Mur2Ac(oyl-L-Ala-gamma-D-Glu-L-Lys-D-Ala-D-Ala)](n)-di-trans,octa-cis-undecaprenyl diphosphate + beta-D-GlcNAc-(1-&gt;4)-Mur2Ac(oyl-L-Ala-gamma-D-Glu-L-Lys-D-Ala-D-Ala)-di-trans,octa-cis-undecaprenyl diphosphate = [GlcNAc-(1-&gt;4)-Mur2Ac(oyl-L-Ala-gamma-D-Glu-L-Lys-D-Ala-D-Ala)](n+1)-di-trans,octa-cis-undecaprenyl diphosphate + di-trans,octa-cis-undecaprenyl diphosphate + H(+). It functions in the pathway cell wall biogenesis; peptidoglycan biosynthesis. Functionally, peptidoglycan polymerase that is essential for cell division. The polypeptide is Probable peptidoglycan glycosyltransferase FtsW (Buchnera aphidicola subsp. Baizongia pistaciae (strain Bp)).